The following is a 283-amino-acid chain: Formamidopyrimidine-DNA glycosylase (283 aa).

The Schiff-base intermediate with DNA role is filled by proline 2. Glutamate 3 serves as the catalytic Proton donor. The active-site Proton donor; for beta-elimination activity is lysine 58. Residues histidine 100, arginine 119, and lysine 162 each coordinate DNA. Residues 247–283 (RVYGREGQRCQTPDCAEKILRKVQSGRSSFYCPACQR) form an FPG-type zinc finger. Residue arginine 273 is the Proton donor; for delta-elimination activity of the active site.

This sequence belongs to the FPG family. As to quaternary structure, monomer. It depends on Zn(2+) as a cofactor.

It catalyses the reaction Hydrolysis of DNA containing ring-opened 7-methylguanine residues, releasing 2,6-diamino-4-hydroxy-5-(N-methyl)formamidopyrimidine.. The catalysed reaction is 2'-deoxyribonucleotide-(2'-deoxyribose 5'-phosphate)-2'-deoxyribonucleotide-DNA = a 3'-end 2'-deoxyribonucleotide-(2,3-dehydro-2,3-deoxyribose 5'-phosphate)-DNA + a 5'-end 5'-phospho-2'-deoxyribonucleoside-DNA + H(+). In terms of biological role, involved in base excision repair of DNA damaged by oxidation or by mutagenic agents. Acts as a DNA glycosylase that recognizes and removes damaged bases. Has a preference for oxidized purines, such as 7,8-dihydro-8-oxoguanine (8-oxoG). Has AP (apurinic/apyrimidinic) lyase activity and introduces nicks in the DNA strand. Cleaves the DNA backbone by beta-delta elimination to generate a single-strand break at the site of the removed base with both 3'- and 5'-phosphates. The polypeptide is Formamidopyrimidine-DNA glycosylase (Jannaschia sp. (strain CCS1)).